Here is a 332-residue protein sequence, read N- to C-terminus: Transaldolase (332 aa).

Lys-135 acts as the Schiff-base intermediate with substrate in catalysis.

It belongs to the transaldolase family. Type 1 subfamily. As to quaternary structure, homodimer.

Its subcellular location is the cytoplasm. It carries out the reaction D-sedoheptulose 7-phosphate + D-glyceraldehyde 3-phosphate = D-erythrose 4-phosphate + beta-D-fructose 6-phosphate. It functions in the pathway carbohydrate degradation; pentose phosphate pathway; D-glyceraldehyde 3-phosphate and beta-D-fructose 6-phosphate from D-ribose 5-phosphate and D-xylulose 5-phosphate (non-oxidative stage): step 2/3. Its function is as follows. Transaldolase is important for the balance of metabolites in the pentose-phosphate pathway. The chain is Transaldolase from Prochlorococcus marinus (strain NATL2A).